We begin with the raw amino-acid sequence, 451 residues long: Alpha-galactosidase (451 aa).

5–71 (PKITFIGAGS…ASGRITCHTN (67 aa)) is an NAD(+) binding site. Residue Asn151 participates in substrate binding. Mn(2+) is bound at residue Cys173. His174 (proton donor) is an active-site residue. His203 serves as a coordination point for Mn(2+). Arg287 is a binding site for substrate.

The protein belongs to the glycosyl hydrolase 4 family. In terms of assembly, homodimer. Requires Mn(2+) as cofactor. The cofactor is NAD(+).

It carries out the reaction Hydrolysis of terminal, non-reducing alpha-D-galactose residues in alpha-D-galactosides, including galactose oligosaccharides, galactomannans and galactolipids.. The polypeptide is Alpha-galactosidase (melA) (Salmonella typhimurium (strain LT2 / SGSC1412 / ATCC 700720)).